Consider the following 260-residue polypeptide: Zinc import ATP-binding protein ZnuC (260 aa).

In terms of domain architecture, ABC transporter spans Ile18–His234. Gly50–Thr57 provides a ligand contact to ATP. The interval Val241–Gly260 is disordered.

The protein belongs to the ABC transporter superfamily. Zinc importer (TC 3.A.1.15.5) family. The complex is composed of two ATP-binding proteins (ZnuC), two transmembrane proteins (ZnuB) and a solute-binding protein (ZnuA).

It localises to the cell inner membrane. The enzyme catalyses Zn(2+)(out) + ATP(in) + H2O(in) = Zn(2+)(in) + ADP(in) + phosphate(in) + H(+)(in). Functionally, part of the ABC transporter complex ZnuABC involved in zinc import. Responsible for energy coupling to the transport system. The polypeptide is Zinc import ATP-binding protein ZnuC (Halorhodospira halophila (strain DSM 244 / SL1) (Ectothiorhodospira halophila (strain DSM 244 / SL1))).